The sequence spans 105 residues: Small ribosomal subunit protein uS10 (105 aa).

This sequence belongs to the universal ribosomal protein uS10 family. Part of the 30S ribosomal subunit.

Involved in the binding of tRNA to the ribosomes. This chain is Small ribosomal subunit protein uS10, found in Cyanothece sp. (strain PCC 7425 / ATCC 29141).